Reading from the N-terminus, the 185-residue chain is Threonylcarbamoyl-AMP synthase (185 aa).

Residues 4–185 (SWRVQQAARE…LATGKVVRPS (182 aa)) form the YrdC-like domain.

This sequence belongs to the SUA5 family. TsaC subfamily.

Its subcellular location is the cytoplasm. The catalysed reaction is L-threonine + hydrogencarbonate + ATP = L-threonylcarbamoyladenylate + diphosphate + H2O. Its function is as follows. Required for the formation of a threonylcarbamoyl group on adenosine at position 37 (t(6)A37) in tRNAs that read codons beginning with adenine. Catalyzes the conversion of L-threonine, HCO(3)(-)/CO(2) and ATP to give threonylcarbamoyl-AMP (TC-AMP) as the acyladenylate intermediate, with the release of diphosphate. In Pseudomonas fluorescens (strain ATCC BAA-477 / NRRL B-23932 / Pf-5), this protein is Threonylcarbamoyl-AMP synthase.